A 475-amino-acid polypeptide reads, in one-letter code: Aspartyl/glutamyl-tRNA(Asn/Gln) amidotransferase subunit B (475 aa).

The protein belongs to the GatB/GatE family. GatB subfamily. Heterotrimer of A, B and C subunits.

The catalysed reaction is L-glutamyl-tRNA(Gln) + L-glutamine + ATP + H2O = L-glutaminyl-tRNA(Gln) + L-glutamate + ADP + phosphate + H(+). It catalyses the reaction L-aspartyl-tRNA(Asn) + L-glutamine + ATP + H2O = L-asparaginyl-tRNA(Asn) + L-glutamate + ADP + phosphate + 2 H(+). Allows the formation of correctly charged Asn-tRNA(Asn) or Gln-tRNA(Gln) through the transamidation of misacylated Asp-tRNA(Asn) or Glu-tRNA(Gln) in organisms which lack either or both of asparaginyl-tRNA or glutaminyl-tRNA synthetases. The reaction takes place in the presence of glutamine and ATP through an activated phospho-Asp-tRNA(Asn) or phospho-Glu-tRNA(Gln). This chain is Aspartyl/glutamyl-tRNA(Asn/Gln) amidotransferase subunit B, found in Staphylococcus aureus (strain bovine RF122 / ET3-1).